We begin with the raw amino-acid sequence, 346 residues long: Phosphoribosylformylglycinamidine cyclo-ligase (346 aa).

The protein belongs to the AIR synthase family.

It is found in the cytoplasm. It carries out the reaction 2-formamido-N(1)-(5-O-phospho-beta-D-ribosyl)acetamidine + ATP = 5-amino-1-(5-phospho-beta-D-ribosyl)imidazole + ADP + phosphate + H(+). It participates in purine metabolism; IMP biosynthesis via de novo pathway; 5-amino-1-(5-phospho-D-ribosyl)imidazole from N(2)-formyl-N(1)-(5-phospho-D-ribosyl)glycinamide: step 2/2. The polypeptide is Phosphoribosylformylglycinamidine cyclo-ligase (Vibrio atlanticus (strain LGP32) (Vibrio splendidus (strain Mel32))).